Reading from the N-terminus, the 536-residue chain is Protein scd2/ral3 (536 aa).

The 63-residue stretch at P24–K86 folds into the SH3 1 domain. Residues V88 to S115 are disordered. Low complexity predominate over residues S101 to S115. An SH3 2 domain is found at S123 to L185. Residues S293 to V413 form the PX domain. In terms of domain architecture, PB1 spans T459–R533.

Scd1, scd2, cdc42, and ras1, in its GTP-bound state, act cooperatively to form a protein complex.

Required for mating and morphogenesis. Interacts directly with scd1 and with cdc42. May bridge and facilitate scd1 and cdc42 interactions. The protein is Protein scd2/ral3 (scd2) of Schizosaccharomyces pombe (strain 972 / ATCC 24843) (Fission yeast).